Reading from the N-terminus, the 332-residue chain is Multiple virulence factor regulator MvfR (332 aa).

Positions 4 to 61 (HNLNHVNMFLQVIASGSISSAARILRKSHTAVSSAVSNLEIDLCVELVRRDGYKVEPT) constitute an HTH lysR-type domain. A DNA-binding region (H-T-H motif) is located at residues 21–40 (ISSAARILRKSHTAVSSAVS).

This sequence belongs to the LysR transcriptional regulatory family. In terms of assembly, forms homooligomers.

The protein resides in the cell inner membrane. It is found in the secreted. With respect to regulation, both 3,4-dihydroxy-2-heptylquinoline (PQS) and its precursor 4-hydroxy-2-heptylquinoline (HHQ) function as ligands and promote MvfR DNA-binding activity leading to transcriptional activation. In terms of biological role, transcription regulator that plays a critical role in virulence by positively regulating the expression of multiple quorum sensing (QS)-regulated virulence factors, genes involved in protein secretion, translation, response to oxidative stress and the phnAB operon. At the stationary phase, negatively autoregulates its function through cleavage and translocation to the extracellular space. The protein is Multiple virulence factor regulator MvfR of Pseudomonas aeruginosa (strain ATCC 15692 / DSM 22644 / CIP 104116 / JCM 14847 / LMG 12228 / 1C / PRS 101 / PAO1).